The chain runs to 537 residues: ATP synthase subunit alpha (537 aa).

174 to 181 serves as a coordination point for ATP; that stretch reads GDRQTGKT.

Belongs to the ATPase alpha/beta chains family. F-type ATPases have 2 components, CF(1) - the catalytic core - and CF(0) - the membrane proton channel. CF(1) has five subunits: alpha(3), beta(3), gamma(1), delta(1), epsilon(1). CF(0) has three main subunits: a(1), b(2) and c(9-12). The alpha and beta chains form an alternating ring which encloses part of the gamma chain. CF(1) is attached to CF(0) by a central stalk formed by the gamma and epsilon chains, while a peripheral stalk is formed by the delta and b chains.

Its subcellular location is the cell inner membrane. The catalysed reaction is ATP + H2O + 4 H(+)(in) = ADP + phosphate + 5 H(+)(out). Produces ATP from ADP in the presence of a proton gradient across the membrane. The alpha chain is a regulatory subunit. This Verminephrobacter eiseniae (strain EF01-2) protein is ATP synthase subunit alpha.